A 370-amino-acid chain; its full sequence is MNEMTHRTKTRPVKVGNLTIGGNNELIIQSMTTTKTHDVEATVAEIKRLEEAGCQVVRVAVPDERAANAIADIKKQINIPLVADIHFDYRLALKAIEGGIDKVRINPGNIGRRHKVEAVVNAAKERGIPIRIGVNAGSLERHILEKYGYPTADGMVESALHHIKILEDLDFHDIIVSMKASDVNLAIEAYEKAARAFDYPLHLGITESGTLFAGTVKSAAGLGAILSKGIGNTLRISLSADPVEEVKVARELLKSFGLASNAATLISCPTCGRIEIDLISIANEVEEYISTLQVPIKVAVLGCAVNGPGEAREADIGIAGARGEGLLFRKGQVVRKVPEEIMVEELKKEIDVIAAEMAAEREKEKETQEQ.

[4Fe-4S] cluster-binding residues include Cys268, Cys271, Cys303, and Glu310.

Belongs to the IspG family. [4Fe-4S] cluster is required as a cofactor.

It carries out the reaction (2E)-4-hydroxy-3-methylbut-2-enyl diphosphate + oxidized [flavodoxin] + H2O + 2 H(+) = 2-C-methyl-D-erythritol 2,4-cyclic diphosphate + reduced [flavodoxin]. It participates in isoprenoid biosynthesis; isopentenyl diphosphate biosynthesis via DXP pathway; isopentenyl diphosphate from 1-deoxy-D-xylulose 5-phosphate: step 5/6. Converts 2C-methyl-D-erythritol 2,4-cyclodiphosphate (ME-2,4cPP) into 1-hydroxy-2-methyl-2-(E)-butenyl 4-diphosphate. The chain is 4-hydroxy-3-methylbut-2-en-1-yl diphosphate synthase (flavodoxin) from Bacillus cereus (strain AH187).